The sequence spans 357 residues: Alanine racemase (357 aa).

Lysine 35 serves as the catalytic Proton acceptor; specific for D-alanine. The residue at position 35 (lysine 35) is an N6-(pyridoxal phosphate)lysine. Arginine 131 is a binding site for substrate. Tyrosine 256 serves as the catalytic Proton acceptor; specific for L-alanine. Methionine 304 provides a ligand contact to substrate.

It belongs to the alanine racemase family. It depends on pyridoxal 5'-phosphate as a cofactor.

The enzyme catalyses L-alanine = D-alanine. It participates in amino-acid biosynthesis; D-alanine biosynthesis; D-alanine from L-alanine: step 1/1. In terms of biological role, catalyzes the interconversion of L-alanine and D-alanine. May also act on other amino acids. The polypeptide is Alanine racemase (alr) (Legionella pneumophila (strain Lens)).